Here is a 277-residue protein sequence, read N- to C-terminus: Bis(5'-nucleosyl)-tetraphosphatase, symmetrical (277 aa).

The protein belongs to the Ap4A hydrolase family.

It carries out the reaction P(1),P(4)-bis(5'-adenosyl) tetraphosphate + H2O = 2 ADP + 2 H(+). Its function is as follows. Hydrolyzes diadenosine 5',5'''-P1,P4-tetraphosphate to yield ADP. The chain is Bis(5'-nucleosyl)-tetraphosphatase, symmetrical from Azotobacter vinelandii (strain DJ / ATCC BAA-1303).